The primary structure comprises 237 residues: Proteasome subunit beta 2 (237 aa).

The segment covering 1–14 (MNNWSQGSTPQGSD) has biased composition (polar residues). The propeptide at 1–42 (MNNWSQGSTPQGSDPSPYAPELGSLPDGSQSDDHGDTVNKTG) is removed in mature form; by autocatalysis. A disordered region spans residues 1-45 (MNNWSQGSTPQGSDPSPYAPELGSLPDGSQSDDHGDTVNKTGTTT). Thr43 functions as the Nucleophile in the catalytic mechanism.

This sequence belongs to the peptidase T1B family. As to quaternary structure, the 20S proteasome core is composed of 14 alpha and 14 beta subunits that assemble into four stacked heptameric rings, resulting in a barrel-shaped structure. The two inner rings, each composed of seven catalytic beta subunits, are sandwiched by two outer rings, each composed of seven alpha subunits. The catalytic chamber with the active sites is on the inside of the barrel. Has a gated structure, the ends of the cylinder being occluded by the N-termini of the alpha-subunits. Is capped at one or both ends by the proteasome regulatory ATPase, PAN.

It localises to the cytoplasm. The enzyme catalyses Cleavage of peptide bonds with very broad specificity.. The formation of the proteasomal ATPase PAN-20S proteasome complex, via the docking of the C-termini of PAN into the intersubunit pockets in the alpha-rings, triggers opening of the gate for substrate entry. Interconversion between the open-gate and close-gate conformations leads to a dynamic regulation of the 20S proteasome proteolysis activity. Its function is as follows. Component of the proteasome core, a large protease complex with broad specificity involved in protein degradation. This chain is Proteasome subunit beta 2, found in Haloterrigena turkmenica (strain ATCC 51198 / DSM 5511 / JCM 9101 / NCIMB 13204 / VKM B-1734 / 4k) (Halococcus turkmenicus).